Here is a 219-residue protein sequence, read N- to C-terminus: Transmembrane emp24 domain-containing protein 10 (219 aa).

The signal sequence occupies residues 1–31 (MSGSSGPQAQRGPCPFALLLLLLLGPSSVLA). The interval 1 to 142 (MSGSSGPQAQ…KNYEEIAKVE (142 aa)) is required for interaction with STX17. At 32–185 (ISFHLPVNSR…RDTNESTNTR (154 aa)) the chain is on the lumenal side. In terms of domain architecture, GOLD spans 41–193 (RKCLREEIHK…TRVLYFSIFS (153 aa)). The interval 147–178 (LEVELRRLEDLSESIVNDFAYMKKREEEMRDT) is required for TMED10 and TMED2 cis-Golgi network localization. A dimethylated arginine mark is found at arginine 171 and arginine 176. An N-linked (GlcNAc...) asparagine glycan is attached at asparagine 179. A helical transmembrane segment spans residues 186–206 (VLYFSIFSMFCLIGLATWQVF). Residues 204–219 (QVFYLRRFFKAKKLIE) are interaction with COPG1. Over 207-219 (YLRRFFKAKKLIE) the chain is Cytoplasmic. The interval 207–219 (YLRRFFKAKKLIE) is interaction with ARF1 and IL1B. Residues 211 to 212 (FF) carry the COPII vesicle coat-binding motif. Residues 211 to 219 (FFKAKKLIE) carry the COPI vesicle coat-binding motif.

Belongs to the EMP24/GP25L family. Predominantly dimeric and to a lesser extent monomeric in the ER. Monomer and dimer in ERGIC and cis-Golgi network. Forms homooligomer (via GOLD domain); the assembly is promoted by direct binding with leaderless cargos and may form a protein channel that facilitates cargo entry into the ERGIC. Forms heterooligomeric complexes with other members of the p24 family such as TMED2, TMED7 and TMED9. Interacts (via GOLD domain) with TMED2 (via GOLD domain); the complex is required for export of TMED10 from the ER to the cis-Golgi network; the complex is proposed to be involved in cis-Golgi network dynamics and / or biogenesis. Associates with the COPI vesicle coat subunits (coatomer). Tetramerization of the cytoplasmic domain at the Golgi membrane in vitro; the complex is proposed to interact with COPI coatomer and induce budding of the vesicles. Interacts with COPG1; the interaction involves TMED10 homodimer. Interacts with ARF1 (GDP-bound); the interaction probably involves a TMED10 oligomer. Interacts with SEC23A, SEC24B, SEC24C and SEC24D components of the coat protein complex II/COPII, indicative of an association of TMED10 with the COPII vesicle coat. Interacts with CD59. Interacts with MPPE1/PGAP5; the complex might recruit and sort GPI-anchored proteins to the ER-exit site, or the interaction might lead to recycling of PGAP5 between the ER and the Golgi. Interacts with F2LR1/PAR2. Interacts with KDELR2/ERD2; the interaction is disrupted by KDELR2 ligand. Found in a complex composed at least of SURF4, TMED2 and TMED10. Associates with the presenilin-dependent gamma-secretase complex. Interacts with STX17; the interaction is direct. Interacts with IL-1; the interaction is direct. Interacts with RAB21 (active GTP-bound form); the interaction is indirect and regulates TMED10 abundance and localization at the Golgi.

It is found in the endoplasmic reticulum membrane. The protein localises to the endoplasmic reticulum-Golgi intermediate compartment membrane. Its subcellular location is the golgi apparatus membrane. The protein resides in the golgi apparatus. It localises to the cis-Golgi network membrane. It is found in the trans-Golgi network membrane. The protein localises to the cytoplasmic vesicle. Its subcellular location is the secretory vesicle membrane. The protein resides in the cell membrane. It localises to the melanosome. Functionally, cargo receptor involved in protein vesicular trafficking and quality control in the endoplasmic reticulum (ER) and Golgi. The p24 protein family is a group of transmembrane proteins that bind coat protein complex I/COPI and coat protein complex II/COPII involved in vesicular trafficking between the membranes. Acts at the lumenal side for incorporation of secretory cargo molecules into transport vesicles and involved in vesicle coat formation at the cytoplasmic side. Mainly functions in the early secretory pathway and cycles between the ER, ER-Golgi intermediate compartment (ERGIC) and Golgi, mediating cargo transport through COPI and COPII-coated vesicles. In COPII vesicle-mediated anterograde transport, involved in the transport of GPI-anchored proteins by acting together with TMED2 as their cargo receptor; the function specifically implies SEC24C and SEC24D of the COPII vesicle coat and lipid raft-like microdomains of the ER. Recognizes GPI anchors structural remodeled in the ER by the GPI inositol-deacylase/PGAP1 and the metallophosphoesterase MPPE1/PGAP5. In COPI vesicle-mediated retrograde transport, involved in the biogenesis of COPI vesicles and vesicle coat recruitment. Involved in trafficking of amyloid beta A4 protein and soluble APP-beta release (independent from the modulation of gamma-secretase activity). Involved in the KDELR2-mediated retrograde transport of the toxin A subunit (CTX-A-K63)together with COPI and the COOH terminus of KDELR2. On Golgi membranes, acts as a primary receptor for ARF1-GDP, a GTP-binding protein involved in COPI-vesicle formation. Increases coatomer-dependent GTPase-activating activity of ARFGAP2 which mediates the hydrolysis of ARF1-bound GTP and therefore modulates protein trafficking from the Golgi apparatus. Involved in the exocytic trafficking of G protein-coupled receptors F2LR1/PAR2 (trypsin and tryspin-like enzyme receptor), OPRM1 (opioid receptor) and P2RY4 (UTD and UDP receptor) from the Golgi to the plasma membrane, thus contributing to receptor resensitization. In addition to its cargo receptor activity, may also act as a protein channel after oligomerization, facilitating the post-translational entry of leaderless cytoplasmic cargo into the ERGIC. Involved in the translocation into ERGIC, the vesicle entry and the secretion of leaderless cargos (lacking the secretion signal sequence), including the mature form of interleukin 1/IL-1 family members, the alpha-crystallin B chain HSPB5, the carbohydrate-binding proteins galectin-1/LGALS1 and galectin-3/LGALS3, the microtubule-associated protein Tau/MAPT, and the annexin A1/ANXA1; the translocation process is dependent on cargo protein unfolding and enhanced by chaperones HSP90AB1 and HSP90B1/GRP9. Could also associates with the presenilin-dependent gamma-secretase complex in order to regulate gamma-cleavages of the amyloid beta A4 protein to yield amyloid-beta 40/Abeta40. The sequence is that of Transmembrane emp24 domain-containing protein 10 (TMED10) from Bos taurus (Bovine).